The primary structure comprises 283 residues: MSESQTESTTVTLTNGMVIPRIGFGAFMLKYNECYGLVTQALDSGYRHIDTAAVYGNEDICGKAIVDWCEKNNVKRTDIFLTSKLANCSDYYSTRAAIRSSLHHLGTYIDLFLIQSPAGGKKSRIASWKAMEEFVDSGDIRSVGVSNYGVKHLQELYASNPKFYPCVNQIELHPFLSQDDIVKYCQSHDIAIEAYSPLTHGIRLNDEKLVPIAKKLNISVAQLLIRWSLQKGYIPIIKSTKKEHMLSDLDVFNFTIPDDVVQELSSFDEHWHAGTTYDPTVCD.

Residue Y55 is the Proton donor of the active site.

It belongs to the aldo/keto reductase family.

Its subcellular location is the cytoplasm. It is found in the nucleus. This is an uncharacterized protein from Schizosaccharomyces pombe (strain 972 / ATCC 24843) (Fission yeast).